The sequence spans 500 residues: NAD(P)H-quinone oxidoreductase chain 4, chloroplastic (500 aa).

14 consecutive transmembrane segments (helical) span residues 4 to 24 (FPWL…IFFL), 35 to 55 (YTIA…CYHF), 87 to 107 (LGSI…AWPV), 111 to 131 (SQLF…LFSS), 134 to 154 (LLLF…LLSM), 167 to 187 (FILY…GMGL), 211 to 231 (ILLY…IPLH), 242 to 262 (HYST…YGLI), 272 to 292 (AHYL…IYAA), 313 to 333 (MGFI…GAIL), 334 to 354 (QILS…TACD), 386 to 406 (LALP…GLIT), 417 to 437 (LITF…LSML), and 462 to 482 (LFLL…PDFV).

It belongs to the complex I subunit 4 family.

It is found in the plastid. The protein localises to the chloroplast thylakoid membrane. The catalysed reaction is a plastoquinone + NADH + (n+1) H(+)(in) = a plastoquinol + NAD(+) + n H(+)(out). It carries out the reaction a plastoquinone + NADPH + (n+1) H(+)(in) = a plastoquinol + NADP(+) + n H(+)(out). The protein is NAD(P)H-quinone oxidoreductase chain 4, chloroplastic of Saccharum officinarum (Sugarcane).